Consider the following 228-residue polypeptide: MKKLLLIAATSATVLSSALSFADCGNDSWYLRVDAGAAMFNKEKDNQTGLKLKSNTAFTGDIGVGNYIAENFRADLTLGTTFSGKLKKSGAVSSLGGANISASHKPNITRLLINGYVDLSNFEMFDVFAGAGIGASMLKEKVSFSGINSGATVSTSYSSKNTTNLAYKLTLGASSQISDGVKAELAYSWISDGKTKGGNVKLFGLGNKQVKGIRYQSHNLTAGLRFDI.

The signal sequence occupies residues 1-22 (MKKLLLIAATSATVLSSALSFA).

This Rickettsia bellii (strain RML369-C) protein is Putative adhesin RBE_1271.